A 652-amino-acid polypeptide reads, in one-letter code: DNA polymerase epsilon subunit B (652 aa).

It belongs to the DNA polymerase epsilon subunit B family. Heterotetramer. Consists of four subunits: POL2, DPB2, DPB3 and DPB4.

It localises to the nucleus. Functionally, as accessory component of the DNA polymerase epsilon (DNA polymerase II) participates in chromosomal DNA replication. The protein is DNA polymerase epsilon subunit B (DPB2) of Yarrowia lipolytica (strain CLIB 122 / E 150) (Yeast).